A 909-amino-acid polypeptide reads, in one-letter code: WD repeat-containing protein 20 homolog (909 aa).

Positions 58–132 (SPAQGKLGSD…SAGNNTVEAR (75 aa)) are disordered. 2 stretches are compositionally biased toward low complexity: residues 80 to 107 (GANT…AISN) and 115 to 127 (SHSN…AGNN). 4 WD repeats span residues 248–288 (IDKT…AATA), 321–362 (TDNC…GIAR), 363–402 (SYFG…VVAR), and 470–517 (ADRN…LRHP). 5 disordered regions span residues 458 to 483 (FEGF…FRSD), 554 to 628 (SGQA…AGSV), 661 to 699 (SDSI…NSGS), 720 to 739 (SEKK…RQHR), and 749 to 775 (NQHN…GHSS). Composition is skewed to polar residues over residues 555-569 (GQAT…SCSP) and 595-606 (TANCTISSQSSP). Composition is skewed to low complexity over residues 612–628 (EAAT…AGSV) and 673–699 (GQRP…NSGS). One copy of the WD 5 repeat lies at 856–893 (IAHERLTALIFREDCFLTACQDGFIYTWARPGHATHAT).

As to quaternary structure, component of the Usp12-46 deubiquitylase complex consisting of Usp12-46, Wdr20 and Uaf1; regulatory subunit that, together with Uaf1, stabilizes Usp12-46. The Usp12-46 deubiquitylase complex associates with arr/arrow; the interaction leads to deubiquitination and stabilization of arr/arrow.

Regulatory component of the Usp12-46 deubiquitylase complex. This complex deubiquitylates the wg/wingless-signaling receptor arr/arrow, which stabilizes the receptor and increases its concentration at the cell surface; this enhances the sensitivity of cells to wg/wingless-signal stimulation. This increases the amplitude and spatial range of the signaling response to the wg/wingless morphogen gradient, facilitating the precise concentration-dependent regulation of its target genes. Required for wg/wingless-mediated signaling in the wing imaginal disc and for wg/wingless-dependent regulation of intestinal stem cell proliferation. This chain is WD repeat-containing protein 20 homolog, found in Drosophila melanogaster (Fruit fly).